A 372-amino-acid polypeptide reads, in one-letter code: MEMAPTMDLEIRNGNGYGDSGEELLAAQAHIYNHIFNFISSMALKCAVELNIPEILHNHQPKAVTLSELVQALQIPQAKSACLYRLLRILVHSGFFAITKIQSEGDEEGYLPTLSSKLLLKNHPMSMSPCLLGLVNPTMVAPMHFFSDWFKRSDDMTPFEATHGASLWKYFGETPHMAEIFNEAMGCETRLAMSVVLKECKGKLEGISSLVDVGGGTGNVGRAIAEAFPNVKCTVLDLPQVVGNLKGSNNLEFVSGDMFQFIPPADVVFLKWILHDWNDEECIKILKRCKEAIPSKEEGGKLIIIDMVVNDHNKGSYESTETQLFYDLTLMALLTGTERTETEWKKLFVAAGFTSYIISPVLGLKSIIEVFP.

S-adenosyl-L-homocysteine is bound by residues Gly214, Asp237, Asp257, Met258, and Lys271. The active-site Proton acceptor is His275. Catalysis depends on residues Asp306 and Glu338.

Belongs to the class I-like SAM-binding methyltransferase superfamily. Cation-independent O-methyltransferase family. COMT subfamily. In terms of assembly, homodimer. As to expression, mostly expressed in stems, and, to a lower extent, in leaves.

The catalysed reaction is (-)-pluviatolide + S-adenosyl-L-methionine = (-)-bursehernin + S-adenosyl-L-homocysteine + H(+). Its pathway is aromatic compound metabolism; phenylpropanoid biosynthesis. O-methyltransferase involved in the biosynthesis of etoposide, a chemotherapeutic compound of the topoisomerase inhibitor family. Catalyzes the methylation of (-)-pluviatolide to produce (-)-bursehernin. This Sinopodophyllum hexandrum (Himalayan may apple) protein is Pluviatolide O-methyltransferase.